The primary structure comprises 195 residues: ATP-dependent Clp protease proteolytic subunit (195 aa).

Catalysis depends on serine 101, which acts as the Nucleophile. Histidine 126 is an active-site residue.

This sequence belongs to the peptidase S14 family. Component of the chloroplastic Clp protease core complex.

The protein resides in the plastid. The protein localises to the chloroplast stroma. The enzyme catalyses Hydrolysis of proteins to small peptides in the presence of ATP and magnesium. alpha-casein is the usual test substrate. In the absence of ATP, only oligopeptides shorter than five residues are hydrolyzed (such as succinyl-Leu-Tyr-|-NHMec, and Leu-Tyr-Leu-|-Tyr-Trp, in which cleavage of the -Tyr-|-Leu- and -Tyr-|-Trp bonds also occurs).. Cleaves peptides in various proteins in a process that requires ATP hydrolysis. Has a chymotrypsin-like activity. Plays a major role in the degradation of misfolded proteins. This chain is ATP-dependent Clp protease proteolytic subunit, found in Cucumis sativus (Cucumber).